The following is a 472-amino-acid chain: Calcitonin gene-related peptide type 1 receptor (472 aa).

An N-terminal signal peptide occupies residues 1 to 28 (MGLLLRSALFKYIIIVLIMLNLRGYVLA). Topologically, residues 29 to 149 (EQEQGSQIPL…FTHEKVKTAL (121 aa)) are extracellular. 3 disulfide bridges follow: C58–C84, C75–C115, and C98–C137. Residues N76, N128, and N133 are each glycosylated (N-linked (GlcNAc...) asparagine). The chain crosses the membrane as a helical span at residues 150–174 (NLYYLTIIGHGLSIASLLISLGIFF). The Cytoplasmic portion of the chain corresponds to 175-185 (YFKNLSCQRIT). A helical membrane pass occupies residues 186–208 (LHKNLFFSFVCNSIITIISLSAV). Residues 209 to 219 (ANNQALVATNP) lie on the Extracellular side of the membrane. A helical membrane pass occupies residues 220 to 248 (VSCKISQFIHLYLMGCNYFWMLCEGIYLH). Over 249–262 (TLIVVAVFAEKQHL) the chain is Cytoplasmic. The chain crosses the membrane as a helical span at residues 263 to 283 (MWYYLLGWGFPLIPACIHAVA). Topologically, residues 284–299 (RSLYYNDNCWISSETH) are extracellular. Residues 300-324 (LLYIIHGPICAALLVNLFFLLNIVR) traverse the membrane as a helical segment. The Cytoplasmic portion of the chain corresponds to 325–339 (VLITKLKVTHQAESN). A helical membrane pass occupies residues 340 to 361 (LYMKAVRATLILVPLLGIEFVL). At 362 to 376 (FPWKPEGRIAEEIYD) the chain is on the extracellular side. A helical transmembrane segment spans residues 377 to 397 (YVMHILMHYQGLLVATIFCFF). The Cytoplasmic portion of the chain corresponds to 398 to 472 (NGEVQAVLKR…VFFKTEKQYM (75 aa)).

It belongs to the G-protein coupled receptor 2 family.

The protein resides in the cell membrane. Functionally, may function as G protein-coupled receptor for calcitonin-gene-related peptides and adrenomedullin. Specificity may be modulated by accessory proteins. May activate cAMP-dependent pathway. In Xenopus tropicalis (Western clawed frog), this protein is Calcitonin gene-related peptide type 1 receptor (calcrl).